The primary structure comprises 337 residues: Phosphate acyltransferase (337 aa).

The protein belongs to the PlsX family. In terms of assembly, homodimer. Probably interacts with PlsY.

Its subcellular location is the cytoplasm. The catalysed reaction is a fatty acyl-[ACP] + phosphate = an acyl phosphate + holo-[ACP]. The protein operates within lipid metabolism; phospholipid metabolism. In terms of biological role, catalyzes the reversible formation of acyl-phosphate (acyl-PO(4)) from acyl-[acyl-carrier-protein] (acyl-ACP). This enzyme utilizes acyl-ACP as fatty acyl donor, but not acyl-CoA. This is Phosphate acyltransferase from Moritella marina (Vibrio marinus).